A 538-amino-acid polypeptide reads, in one-letter code: Efflux pump radE (538 aa).

3 stretches are compositionally biased toward basic and acidic residues: residues 1–12 (MATSRDFGREPP), 20–35 (EAGHTLHDGCQHVSEH), and 65–74 (DPKEEERDPN). Disordered stretches follow at residues 1-35 (MATSRDFGREPPRQQQDSDEAGHTLHDGCQHVSEH) and 65-90 (DPKEEERDPNIVDWDGPDDPANPQNW). 12 helical membrane-spanning segments follow: residues 100 to 120 (AVLSIITFMVPLASSMFAPGI), 134 to 154 (LATFVVSVYILGLAAGPLVLA), 163 to 183 (VVIYHVGNVLFIIFTVACALS), 194 to 214 (FLCGLVGAGPIAIGGGTIADL), 225 to 245 (SVWSLGPLLGPSVGPVAGGFL), 253 to 273 (WIFWVLAITAGVITIAGLLVL), 327 to 347 (PICLVLSVYSAFVYAMIYFMI), 362 to 382 (EGIVGLVYIALGLGMLFGVVV), 409 to 429 (IPPTLLAGFLIPTGLFIYGWT), 436 to 456 (WAVPLLGALLAGMGICIINIS), 482 to 502 (IFGATFPLFALQMYETLGLGW), and 505 to 525 (SLLAFIAVAMFAIPPLLFYYG).

Belongs to the major facilitator superfamily.

Its subcellular location is the cell membrane. In terms of biological role, efflux pump that might be required for efficient secretion of radicicol or other secondary metabolies produced by the radicicol gene cluster. This Floropilus chiversii (Chaetomium chiversii) protein is Efflux pump radE.